The chain runs to 289 residues: MMTQWPSPAKLNLFLYITGQRADGYHTLQTLFQFVDYGDTISIEPRQDGEIHLLTPVDDVASEDNLIVRAARLLVQAAANSGRLPEHYGADIGVEKRLPMGGGLGGGSSNAATVLVALNHLWGCGFSQDELATLGLTLGADVPVFVRGHAAFAEGVGEILTPVDPPEKWYLIAHPGVSIPTPVIFNDPELPRNTPVRSIETLLKCEFGNDCEVIARKRFRKVDAALSWLLEYAPSRLTGTGSCVFAEFDTESAARQVLEQAPEWLHGFVARGMNTSPLQQTILAQTEFR.

K10 is an active-site residue. Residue 99 to 109 participates in ATP binding; it reads PMGGGLGGGSS. D141 is a catalytic residue.

Belongs to the GHMP kinase family. IspE subfamily. In terms of assembly, homodimer.

The enzyme catalyses 4-CDP-2-C-methyl-D-erythritol + ATP = 4-CDP-2-C-methyl-D-erythritol 2-phosphate + ADP + H(+). It functions in the pathway isoprenoid biosynthesis; isopentenyl diphosphate biosynthesis via DXP pathway; isopentenyl diphosphate from 1-deoxy-D-xylulose 5-phosphate: step 3/6. Its function is as follows. Catalyzes the phosphorylation of the position 2 hydroxy group of 4-diphosphocytidyl-2C-methyl-D-erythritol. In Enterobacter sp. (strain 638), this protein is 4-diphosphocytidyl-2-C-methyl-D-erythritol kinase.